A 143-amino-acid polypeptide reads, in one-letter code: Large ribosomal subunit protein uL11 (143 aa).

Belongs to the universal ribosomal protein uL11 family. As to quaternary structure, part of the ribosomal stalk of the 50S ribosomal subunit. Interacts with L10 and the large rRNA to form the base of the stalk. L10 forms an elongated spine to which L12 dimers bind in a sequential fashion forming a multimeric L10(L12)X complex. Post-translationally, one or more lysine residues are methylated.

Functionally, forms part of the ribosomal stalk which helps the ribosome interact with GTP-bound translation factors. The polypeptide is Large ribosomal subunit protein uL11 (Ectopseudomonas mendocina (strain ymp) (Pseudomonas mendocina)).